A 70-amino-acid polypeptide reads, in one-letter code: DNA gyrase inhibitor YacG (70 aa).

Zn(2+)-binding residues include cysteine 21, cysteine 24, cysteine 36, and cysteine 40.

Belongs to the DNA gyrase inhibitor YacG family. Interacts with GyrB. Requires Zn(2+) as cofactor.

Its function is as follows. Inhibits all the catalytic activities of DNA gyrase by preventing its interaction with DNA. Acts by binding directly to the C-terminal domain of GyrB, which probably disrupts DNA binding by the gyrase. This Sinorhizobium medicae (strain WSM419) (Ensifer medicae) protein is DNA gyrase inhibitor YacG.